We begin with the raw amino-acid sequence, 937 residues long: Isoleucine--tRNA ligase (937 aa).

Residues 58-68 carry the 'HIGH' region motif; the sequence is PYANGHIHLGT. E566 lines the L-isoleucyl-5'-AMP pocket. Residues 607–611 carry the 'KMSKS' region motif; the sequence is KMSKS. ATP is bound at residue K610. Residues C906, C909, C925, and C928 each contribute to the Zn(2+) site.

Belongs to the class-I aminoacyl-tRNA synthetase family. IleS type 1 subfamily. In terms of assembly, monomer. Zn(2+) serves as cofactor.

It localises to the cytoplasm. The catalysed reaction is tRNA(Ile) + L-isoleucine + ATP = L-isoleucyl-tRNA(Ile) + AMP + diphosphate. Catalyzes the attachment of isoleucine to tRNA(Ile). As IleRS can inadvertently accommodate and process structurally similar amino acids such as valine, to avoid such errors it has two additional distinct tRNA(Ile)-dependent editing activities. One activity is designated as 'pretransfer' editing and involves the hydrolysis of activated Val-AMP. The other activity is designated 'posttransfer' editing and involves deacylation of mischarged Val-tRNA(Ile). The protein is Isoleucine--tRNA ligase of Lawsonia intracellularis (strain PHE/MN1-00).